We begin with the raw amino-acid sequence, 183 residues long: Bifunctional protein PyrR (183 aa).

The short motif at 100–112 is the PRPP-binding element; that stretch reads VILVDDVLYTGRT.

The protein belongs to the purine/pyrimidine phosphoribosyltransferase family. PyrR subfamily.

It carries out the reaction UMP + diphosphate = 5-phospho-alpha-D-ribose 1-diphosphate + uracil. Regulates the transcription of the pyrimidine nucleotide (pyr) operon in response to exogenous pyrimidines. Functionally, also displays a weak uracil phosphoribosyltransferase activity which is not physiologically significant. The protein is Bifunctional protein PyrR of Deinococcus deserti (strain DSM 17065 / CIP 109153 / LMG 22923 / VCD115).